Reading from the N-terminus, the 274-residue chain is Octanoyl-[GcvH]:protein N-octanoyltransferase (274 aa).

The BPL/LPL catalytic domain maps to 37–242 (QGNDAVVRTW…AMKTLGATLS (206 aa)). Cys-141 (acyl-thioester intermediate) is an active-site residue.

Belongs to the octanoyltransferase LipL family.

It carries out the reaction N(6)-octanoyl-L-lysyl-[glycine-cleavage complex H protein] + L-lysyl-[lipoyl-carrier protein] = N(6)-octanoyl-L-lysyl-[lipoyl-carrier protein] + L-lysyl-[glycine-cleavage complex H protein]. It functions in the pathway protein modification; protein lipoylation via endogenous pathway; protein N(6)-(lipoyl)lysine from octanoyl-[acyl-carrier-protein]. Its function is as follows. Catalyzes the amidotransfer (transamidation) of the octanoyl moiety from octanoyl-GcvH to the lipoyl domain of the E2 subunit of lipoate-dependent enzymes. This Macrococcus caseolyticus (strain JCSC5402) (Macrococcoides caseolyticum) protein is Octanoyl-[GcvH]:protein N-octanoyltransferase.